Consider the following 410-residue polypeptide: Adenosine receptor A2a (410 aa).

The Extracellular portion of the chain corresponds to 1–4; sequence MGSS. Residues 5-29 traverse the membrane as a helical segment; sequence VYIMVELAIAVLAILGNVLVCWAVW. Residues 30 to 39 lie on the Cytoplasmic side of the membrane; the sequence is INSNLQNVTN. The chain crosses the membrane as a helical span at residues 40 to 63; the sequence is FFVVSLAAADIAVGVLAIPFAITI. At 64–74 the chain is on the extracellular side; it reads STGFCAACHGC. 3 disulfides stabilise this stretch: Cys68–Cys154, Cys71–Cys143, and Cys74–Cys161. The chain crosses the membrane as a helical span at residues 75-97; sequence LFFACFVLVLTQSSIFSLLAIAI. At 98–117 the chain is on the cytoplasmic side; it reads DRYIAIRIPLRYNGLVTGMR. The chain crosses the membrane as a helical span at residues 118 to 140; that stretch reads AKGIIAICWVLSFAIGLTPMLGW. The Extracellular portion of the chain corresponds to 141–168; the sequence is NNCSQKDENSTKTCGEGRVTCLFEDVVP. Asn142 and Asn149 each carry an N-linked (GlcNAc...) asparagine glycan. Residue Glu164 participates in adenosine binding. Residues 169-193 form a helical membrane-spanning segment; sequence MNYMVYYNFFAFVLLPLLLMLAIYL. Over 194-229 the chain is Cytoplasmic; it reads RIFLAARRQLKQMESQPLPGERTRSTLQKEVHAAKS. The chain crosses the membrane as a helical span at residues 230 to 253; the sequence is LAIIVGLFALCWLPLHIINCFTFF. Position 248 (Asn248) interacts with adenosine. A disulfide bond links Cys254 and Cys257. The Extracellular segment spans residues 254-261; sequence CSTCQHAP. A helical membrane pass occupies residues 262 to 285; the sequence is PWLMYLAIILSHSNSVVNPFIYAY. Adenosine-binding residues include Ser272 and His273. The Cytoplasmic portion of the chain corresponds to 286–410; it reads RIREFRQTFR…ASWSSEFAPS (125 aa). Residues 322–410 form an interaction with GAS2L2 region; the sequence is HSTEGEQVSL…ASWSSEFAPS (89 aa). Residues 342-410 form a disordered region; sequence ANGSAPHSGR…ASWSSEFAPS (69 aa). The span at 377–389 shows a compositional bias: basic and acidic residues; that stretch reads TQEHQEGQEHPGL. The segment covering 401–410 has biased composition (polar residues); it reads ASWSSEFAPS.

It belongs to the G-protein coupled receptor 1 family. In terms of assembly, interacts (via cytoplasmic C-terminal domain) with USP4; the interaction is direct. May interact with DRD4. Interacts with NECAB2. Interacts (via cytoplasmic C-terminal domain) with GAS2L2; interaction enhances receptor-mediated adenylyl cyclase activity. Ubiquitinated. Deubiquitinated by USP4; leading to stabilization and expression at the cell surface.

The protein resides in the cell membrane. In terms of biological role, receptor for adenosine. The activity of this receptor is mediated by G proteins which activate adenylyl cyclase. In Mus musculus (Mouse), this protein is Adenosine receptor A2a (Adora2a).